The chain runs to 190 residues: Threonylcarbamoyl-AMP synthase (190 aa).

One can recognise a YrdC-like domain in the interval 7-190 (LGSIAQAVDV…ALTGERFRQG (184 aa)).

It belongs to the SUA5 family. TsaC subfamily.

Its subcellular location is the cytoplasm. It carries out the reaction L-threonine + hydrogencarbonate + ATP = L-threonylcarbamoyladenylate + diphosphate + H2O. In terms of biological role, required for the formation of a threonylcarbamoyl group on adenosine at position 37 (t(6)A37) in tRNAs that read codons beginning with adenine. Catalyzes the conversion of L-threonine, HCO(3)(-)/CO(2) and ATP to give threonylcarbamoyl-AMP (TC-AMP) as the acyladenylate intermediate, with the release of diphosphate. This Enterobacter sp. (strain 638) protein is Threonylcarbamoyl-AMP synthase.